The chain runs to 181 residues: MKKCLLFLTTIALILSLSTNAFAKNTSGDLSQKQALQLALSAREHFWNTMSGHNPKVKKAVCPSGTFEYQNLQYVYMCSDLGTKAKAVNYLTPIFTKTAIEKGFKDYHFTVSKGKLAVPIGDGDNLLNWKKSTAKLISKKGSTITYEFTVPTLDGSPSAKRKVTFVKENKKWKVNQFDAVI.

A signal peptide spans 1-23 (MKKCLLFLTTIALILSLSTNAFA).

This is an uncharacterized protein from Bacillus subtilis (strain 168).